The primary structure comprises 655 residues: Kelch-like protein 13 (655 aa).

Positions 92–161 (CDVTLMPGDT…IYTAKLSLNM (70 aa)) constitute a BTB domain. In terms of domain architecture, BACK spans 196-297 (CVEVGRIANT…TPQELINYVQ (102 aa)). 6 Kelch repeats span residues 341–389 (HLVT…VIGN), 390–441 (FLYV…ALKG), 442–488 (YLYA…VYGG), 490–535 (MYIS…TVGE), 537–587 (LYVI…VFEN), and 588–636 (KIYV…TLTV).

In terms of assembly, component of the BCR(KLHL9-KLHL13) E3 ubiquitin ligase complex, at least composed of CUL3, KLHL9, KLHL13 and RBX1. Interacts with AURKB.

It functions in the pathway protein modification; protein ubiquitination. In terms of biological role, substrate-specific adapter of a BCR (BTB-CUL3-RBX1) E3 ubiquitin-protein ligase complex required for mitotic progression and cytokinesis. The BCR(KLHL9-KLHL13) E3 ubiquitin ligase complex mediates the ubiquitination of AURKB and controls the dynamic behavior of AURKB on mitotic chromosomes and thereby coordinates faithful mitotic progression and completion of cytokinesis. The chain is Kelch-like protein 13 (KLHL13) from Bos taurus (Bovine).